Here is a 426-residue protein sequence, read N- to C-terminus: Serine/threonine-protein kinase ssn3 (426 aa).

The Protein kinase domain occupies Y41 to F368. ATP is bound by residues I47–V55 and K71. The Proton acceptor role is filled by D173. Positions R390 to E426 are disordered.

It belongs to the protein kinase superfamily. CMGC Ser/Thr protein kinase family. CDC2/CDKX subfamily. As to quaternary structure, component of the srb8-11 complex, a regulatory module of the Mediator complex. It depends on Mg(2+) as a cofactor.

The protein localises to the nucleus. The catalysed reaction is L-seryl-[protein] + ATP = O-phospho-L-seryl-[protein] + ADP + H(+). The enzyme catalyses L-threonyl-[protein] + ATP = O-phospho-L-threonyl-[protein] + ADP + H(+). It catalyses the reaction [DNA-directed RNA polymerase] + ATP = phospho-[DNA-directed RNA polymerase] + ADP + H(+). In terms of biological role, component of the srb8-11 complex. The srb8-11 complex is a regulatory module of the Mediator complex which is itself dependent transcription. The srb8-11 complex may be involved in the transcriptional repression of a subset of genes regulated by Mediator. It may inhibit the association of the Mediator complex with RNA polymerase II to form the holoenzyme complex. The srb8-11 complex phosphorylates the C-terminal domain (CTD) of the largest subunit of RNA polymerase II. The sequence is that of Serine/threonine-protein kinase ssn3 (ssn3) from Neosartorya fischeri (strain ATCC 1020 / DSM 3700 / CBS 544.65 / FGSC A1164 / JCM 1740 / NRRL 181 / WB 181) (Aspergillus fischerianus).